The sequence spans 126 residues: Large ribosomal subunit protein bL17 (126 aa).

It belongs to the bacterial ribosomal protein bL17 family. Part of the 50S ribosomal subunit. Contacts protein L32.

This chain is Large ribosomal subunit protein bL17, found in Limosilactobacillus fermentum (strain NBRC 3956 / LMG 18251) (Lactobacillus fermentum).